A 2403-amino-acid polypeptide reads, in one-letter code: Highly reducing polyketide synthase fogA (2403 aa).

One can recognise a Ketosynthase family 3 (KS3) domain in the interval 3-428 (DDPPCIVGMA…GANAHVILES (426 aa)). Residues C176, H311, and H350 each act as for beta-ketoacyl synthase activity in the active site. The interval 538–858 (VFTGQGAQYA…PYAPSLVRKE (321 aa)) is malonyl-CoA:ACP transacylase (MAT) domain. The For malonyltransferase activity role is filled by S632. The interval 929 to 1068 (HELLGTFALT…GSIRVVEPLT (140 aa)) is N-terminal hotdog fold. A dehydratase (DH) domain region spans residues 929 to 1238 (HELLGTFALT…DARMSLYTGK (310 aa)). Positions 929–1241 (HELLGTFALT…MSLYTGKSSA (313 aa)) constitute a PKS/mFAS DH domain. H961 functions as the Proton acceptor; for dehydratase activity in the catalytic mechanism. The segment at 1084-1241 (SFEASPTNRW…MSLYTGKSSA (158 aa)) is C-terminal hotdog fold. The active-site Proton donor; for dehydratase activity is D1152. An enoyl reductase (ER) domain region spans residues 1663 to 1981 (GATDSMFFQQ…QQDRIGKIVI (319 aa)). Residues 2006-2185 (VYLLIGCLGG…AVAVGLGMIS (180 aa)) form a ketoreductase (KR) domain region. A disordered region spans residues 2280-2300 (AQNSTSSSGSNSNTPTTAAPW). Low complexity predominate over residues 2282–2296 (NSTSSSGSNSNTPTT). The Carrier domain occupies 2320–2398 (SLNAAILRLI…GLAVVVEGKL (79 aa)). S2357 is subject to O-(pantetheine 4'-phosphoryl)serine.

The cofactor is pantetheine 4'-phosphate.

It participates in secondary metabolite biosynthesis. Functionally, highly reducing polyketide synthase; part of the gene cluster that mediates the biosynthesis of flavoglaucin and congeners (including aspergin, dihydroauroglaucin and auroglaucin), prenylated salicylaldehyde derivatives carrying a saturated or an unsaturated C-7 side chain. FogA releases the carboxylic acid (8E,10E,12E)-3,5,7-trihydroxytetradeca-8,10,12-trienoic acid as its product, as well as derivatives with one and two double bonds. FogA is indeed able to reduce the initial triketide, thus being at least partially responsible for the differently saturated heptyl side chains of flavoglaucin congeners. The oxidoreductases fogB, fogC and fogD modify the nascent polyketide in fogA-bound form and, together, fogA, fogB, fogC and fogD are necessary for the formation of the aromatic core and the cyclized PKS products are released as salicyl alcohols. In particular, fogB is responsible for oxidation of a hydroxyl group or reduction of remaining double bond(s) at the C-7 residue whereas fogD is probably involved in the reductive release of the modified PKS products. The cytochrome P450 monooxygenase fogE is then responsible for the hydroxylation at C-3 of the benzene ring. The fogE products are substrates of the prenyltransferase fogH and the prenylated benzyl alcohols are subsequently oxidized by the fogF to produce the final aryl aldehydes flavoglaucin and congeners. The short-chain dehydrogenase fogG does not seem to be involved in the biosynthesis of the prenylated salicylaldehyde derivatives. This Aspergillus ruber (strain CBS 135680) protein is Highly reducing polyketide synthase fogA.